We begin with the raw amino-acid sequence, 327 residues long: MSNQFDQLKKLSTIVCDSGDPELVKASGSQDATTNPSLILKVAQEPKFQELLNEAVVWGIRQNGDDLQTLSFILDKIQVNFALEIIKNIPGRISLEIDARLSFNVEAMVQRAVFLSQLFEAMGGDKKRLLVKIPGTWEGIRAVEFLEAKGIACNVTLIFNLVQAIAAAKAKATLISPFVGRIYDWWIAAYGDEGYSIDADPGVASVSNIYAYYKKFGIPTQIMAASFRTKEQVLALAGCDLLTISPKLLDELKKSQHPVKKELDPAEAKKLDVQPIELTESFFRFLMNEDAMATEKLAEGIRIFAGDTQILETAITEFIKQIAAEGA.

The Schiff-base intermediate with substrate role is filled by lysine 132.

This sequence belongs to the transaldolase family. Type 1 subfamily.

The protein resides in the cytoplasm. The catalysed reaction is D-sedoheptulose 7-phosphate + D-glyceraldehyde 3-phosphate = D-erythrose 4-phosphate + beta-D-fructose 6-phosphate. Its pathway is carbohydrate degradation; pentose phosphate pathway; D-glyceraldehyde 3-phosphate and beta-D-fructose 6-phosphate from D-ribose 5-phosphate and D-xylulose 5-phosphate (non-oxidative stage): step 2/3. In terms of biological role, transaldolase is important for the balance of metabolites in the pentose-phosphate pathway. The protein is Transaldolase of Chlamydia pneumoniae (Chlamydophila pneumoniae).